A 68-amino-acid chain; its full sequence is Neuronal regeneration-related protein (68 aa).

Positions 21–54 (MEGRLPKGRLPVPKEVNRKKNDETNAASLTPLGS) are disordered. Residues 44–54 (TNAASLTPLGS) show a composition bias toward polar residues.

In terms of assembly, interacts with the latency-associated peptides (LAP) of TGFB1 and TGFB2; the interaction results in a decrease in TGFB autoinduction. Interacts with FLNA. Post-translationally, phosphorylated on Ser-59. Phosphorylation decreases stability and activity.

The protein resides in the cytoplasm. Its function is as follows. May have roles in neural function and cellular differentiation. Ectopic expression promotes axonal regeneration, induces differentiation of fibroblast into myofibroblast, induces myofibroblast ameboid migration, augments motility of gliomas, and increases retinoic-acid regulation of lipid-droplet biogenesis. Down-regulates the expression of TGFB1 and TGFB2 but not of TGFB3. May play a role in the regulation of alveolar generation. The polypeptide is Neuronal regeneration-related protein (NREP) (Pongo abelii (Sumatran orangutan)).